A 676-amino-acid polypeptide reads, in one-letter code: Cysteine-rich receptor-like protein kinase 4 (676 aa).

Positions 1 to 16 (MSFFWLFPFLLHLSFA) are cleaved as a signal peptide. Over 17–287 (DSLSPLSAPV…ISERGKGRNS (271 aa)) the chain is Extracellular. Gnk2-homologous domains follow at residues 31–135 (HLNH…HRNI) and 146–246 (ILLN…NYSF). 7 N-linked (GlcNAc...) asparagine glycosylation sites follow: N33, N46, N64, N152, N181, N243, and N248. The disordered stretch occupies residues 252-279 (TRSSSPPSLPPRSTPQQQLKLAPPPLIS). The N-linked (GlcNAc...) asparagine glycan is linked to N286. The helical transmembrane segment at 288 to 308 (SVIIVVVVPIIALLLLFVAFF) threads the bilayer. Residues 309-676 (SLRAKKTRTN…DASITNVTPR (368 aa)) lie on the Cytoplasmic side of the membrane. One can recognise a Protein kinase domain in the interval 351–631 (FCETNKLGQG…QMLTTSSIAL (281 aa)). ATP-binding positions include 357 to 365 (LGQGGFGEV) and K379. The residue at position 424 (Y424) is a Phosphotyrosine. The Proton acceptor role is filled by D476. T516 carries the post-translational modification Phosphothreonine. Y524 carries the post-translational modification Phosphotyrosine.

Belongs to the protein kinase superfamily. Ser/Thr protein kinase family. CRK subfamily.

Its subcellular location is the membrane. The enzyme catalyses L-seryl-[protein] + ATP = O-phospho-L-seryl-[protein] + ADP + H(+). It carries out the reaction L-threonyl-[protein] + ATP = O-phospho-L-threonyl-[protein] + ADP + H(+). The protein is Cysteine-rich receptor-like protein kinase 4 (CRK4) of Arabidopsis thaliana (Mouse-ear cress).